Consider the following 384-residue polypeptide: MSGHLHIGIVVGEASGDILGAALMTELRRHFPNAEFSGIGGPRMLELGFHSYFPQDRLAVMGLIEPLKRLPELLRIRKFLREHFTANPPSVFIGIDSPDFTIPLEGALKEKGIKTVHYVSPSVWAWRQKRIINIARSVDLMLTLLPFEARFYEEHGVPVEFVGHHLADAIPDNVDKTAARQLLGLPGQGRIVALLPGSRSSEVERMAELFFRTAVFCIEQDPSLHFVVPAANSDRYRQLHIELNDFVDFPIHLVNGHSQDAMAAADVLLVASGTVTLEALLLKKPMVVAYKMAPLTYRILSWLVKTPFVSLPNLLAQKMLVPELLQDKATPEALSAAVMNYFENPEQSMAVSQTFADMHRELKCNASARAADAIARLIKPAEAS.

It belongs to the LpxB family.

It catalyses the reaction a lipid X + a UDP-2-N,3-O-bis[(3R)-3-hydroxyacyl]-alpha-D-glucosamine = a lipid A disaccharide + UDP + H(+). Its pathway is bacterial outer membrane biogenesis; LPS lipid A biosynthesis. Its function is as follows. Condensation of UDP-2,3-diacylglucosamine and 2,3-diacylglucosamine-1-phosphate to form lipid A disaccharide, a precursor of lipid A, a phosphorylated glycolipid that anchors the lipopolysaccharide to the outer membrane of the cell. This is Lipid-A-disaccharide synthase from Cellvibrio japonicus (strain Ueda107) (Pseudomonas fluorescens subsp. cellulosa).